The following is a 614-amino-acid chain: Vitamin B12 transporter BtuB (614 aa).

A signal peptide spans 1–20 (MIKKASLLTACSVTAFSAWA). Residues 26–33 (DTLVVTAN) carry the TonB box motif. Residues 38-152 (PRSTVLAPTT…IGGVVNIITT (115 aa)) enclose the TBDR plug domain. Residues Leu-83, Ser-85, Asn-92, and 110-111 (GS) each bind cyanocob(III)alamin. The 460-residue stretch at 155 to 614 (EPGTEISAGW…EYTLSGSYTF (460 aa)) folds into the TBDR beta-barrel domain. 3 beta stranded membrane-spanning segments follow: residues 158–165 (TEISAGWG), 169–178 (YQNYDVSTQQ), and 184–195 (TRVTLLGDYAHT). Asp-199, Gln-211, Asp-213, and Asp-215 together coordinate Ca(2+). 2 consecutive transmembrane segments (beta stranded) span residues 217-227 (FLSKTLYGALE) and 232-248 (DAWS…NRTN). The Ca(2+) site is built by Tyr-249 and Asp-250. Ala-251 is a cyanocob(III)alamin binding site. Position 261 (Asp-261) interacts with Ca(2+). The next 14 beta stranded transmembrane spans lie at 263–277 (RKLY…LRYN), 279–296 (ELIK…KDYN), 309–325 (TLDE…NNII), 328–337 (HGNVGAGVDW), 353–369 (YDQR…QQVG), 371–381 (FTFEGAARSDD), 385–400 (FGRH…WEFI), 403–417 (YRFI…KAPN), 434–443 (KSKQWEGAFE), 449–458 (VNWRISGYRN), 473–490 (YYNE…TANF), 494–509 (PLTH…ARNA), 517–529 (RRAK…QLDW), and 535–550 (DWGI…YDKD). Thr-309 lines the cyanocob(III)alamin pocket. Residue Arg-517 participates in cyanocob(III)alamin binding. Cyanocob(III)alamin is bound at residue Tyr-551. 3 beta stranded membrane-spanning segments follow: residues 558–572 (TVKM…LAVA), 585–596 (IANLFDKDYETV), and 602–614 (AGRE…SYTF). Residues 597-614 (YGYQTAGREYTLSGSYTF) carry the TonB C-terminal box motif.

It belongs to the TonB-dependent receptor family. BtuB (TC 1.B.14.3.1) subfamily.

It is found in the cell outer membrane. Functionally, involved in the active translocation of vitamin B12 (cyanocobalamin) across the outer membrane to the periplasmic space. It derives its energy for transport by interacting with the trans-periplasmic membrane protein TonB. This Escherichia coli O157:H7 protein is Vitamin B12 transporter BtuB.